The following is a 305-amino-acid chain: N-acetylglucosamine-1-phosphotransferase subunit gamma (305 aa).

The signal sequence occupies residues 1 to 24 (MAAGLARLLLLLGLSAGGPAPAGA). In terms of domain architecture, MRH spans 69-171 (GKCFSLVEST…TFETPLVCHP (103 aa)). Cysteines 71 and 84 form a disulfide. N-linked (GlcNAc...) asparagine glycosylation is found at Asn88 and Asn115. 2 disulfide bridges follow: Cys129/Cys157 and Cys142/Cys169. Residues 176-279 (VYPTLPEALQ…YTRPTETSNL (104 aa)) form the DMAP1-binding domain. A disordered region spans residues 267 to 305 (GIPYTRPTETSNLEHLGHETPRAKSPEQLRGDPGLRGSL). The segment covering 281–296 (HLGHETPRAKSPEQLR) has biased composition (basic and acidic residues).

As to quaternary structure, homodimer; disulfide-linked. Hexamer of two alpha (GNPTAB), two beta (GNPTAB) and two gamma (GNPTG) subunits; disulfide-linked. The alpha and/or the beta subunits of the enzyme constitute the catalytic subunits. Cys-245 mediates the formation of the interchain disulfide bond for formation of the homodimer. Cys-142, Cys-157 and Cys-169 are involved in intramolecular disulfide bonds formation. Widely expressed.

The protein localises to the secreted. The protein resides in the golgi apparatus. Its function is as follows. Non-catalytic subunit of the N-acetylglucosamine-1-phosphotransferase complex, an enzyme that catalyzes the formation of mannose 6-phosphate (M6P) markers on high mannose type oligosaccharides in the Golgi apparatus. Binds and presents the high mannose glycans of the acceptor to the catalytic alpha and beta subunits (GNPTAB). Enhances the rate of N-acetylglucosamine-1-phosphate transfer to the oligosaccharides of acid hydrolase acceptors. The chain is N-acetylglucosamine-1-phosphotransferase subunit gamma (GNPTG) from Homo sapiens (Human).